Consider the following 580-residue polypeptide: Probable glucomannan 4-beta-mannosyltransferase 2 (580 aa).

A compositionally biased stretch (polar residues) spans 1 to 12; it reads MSTNGGAPSQKR. The segment at 1-33 is disordered; that stretch reads MSTNGGAPSQKRSWLPSRPLLTTTTQTYPPPLL. Over residues 15–27 the composition is skewed to low complexity; sequence LPSRPLLTTTTQT. The helical transmembrane segment at 85-105 threads the bilayer; that stretch reads AVWACLAMSAMLVAEAAWMGL. The active site involves D182. D241 and D243 together coordinate substrate. The active site involves D335. A run of 4 helical transmembrane segments spans residues 414-434, 437-457, 528-548, and 554-574; these read AIAPILTFLFYCIVIPLSAMV, VTIPVWGLVYIPTAITIMNAI, IYIPELLLALYLLICASYDFV, and YYIYIYLQAVAFTVMGFGFVG.

Belongs to the glycosyltransferase 2 family. Plant cellulose synthase-like A subfamily.

It is found in the golgi apparatus membrane. It catalyses the reaction GDP-mannose + (glucomannan)n = GDP + (glucomannan)n+1.. Its function is as follows. Probable mannan synthase which consists of a 4-beta-mannosyltransferase activity on mannan using GDP-mannose. The beta-1,4-mannan product is the backbone for galactomannan synthesis by galactomannan galactosyltransferase. Galactomannan is a noncellulosic polysaccharides of plant cell wall. This Oryza sativa subsp. japonica (Rice) protein is Probable glucomannan 4-beta-mannosyltransferase 2.